Reading from the N-terminus, the 804-residue chain is MLLSKKVIANFIPTITKIEDKKIVEALNAIGAEVESIKTFSMIDYLIIGKIFTIKKHPHAEKLNICSIQISDNKFINIISDSPNLFDQTKVLNKYVIVAMEGAELPNGITVINRDIRGMNSSGLLCSYADLNPQSSEYLSEYDSKNIIILDKANLGDTEVYKYLNIDDTIFDISIPSSRPDWHGIRFLAKELAAYLNLKYVELIGRAKQTDFHQINFKVLDETDNKAKYFGGIHLRNYQLQQSSWNTKGILINNHIKPINDLVDLSNLIPLFVANPIHIHDADKIVGDVRLVQATKKEQFLALDNKWYTVQENDLLVVDDEKIIALAGIIGSMATAVDENSINYFIEVGNFDRHQIIKSAAFHKINTYSANLFSKEISLYQTKKTFEYLYQYLLTKVYNQQLSELSKTFSVDEYHQQVKVNYDKIRSLLGSMNYLPDAMIQKSLTDLGFLVEDDLVYVPSYRNDIYNWQDLVEELLKILNINLFQPIPIKADYLLEVNNETNELLDRLSKKLRSLKFNHIRTYNLTSKKRAELLNLFKYQDPVVVSKPISETRQYYRQNILTNLLEVYQLNRSYKNKLYPIFEIQSLLTKNGANHHIGLVMANNLFNHSYDPSSGIKLDLITIKGISDIIVQNFGFNCNYQTINDDTYLVKNDSLKLVVYDETIGYIGKIKKSILKEFDLADQDIYCLDINLERLITSINRYVRTYEAYDHYQEVTRDITFQLKNEVDFNSFINVINSFNKLSKWEIISIFDATNQIDTNKTYQPTKYTVRCYLKQGDKTYTTKEINQIFDELIDLMKTKQILI.

The tRNA-binding domain maps to 40–161 (FSMIDYLIIG…KANLGDTEVY (122 aa)). The region spanning 413–486 (EYHQQVKVNY…KILNINLFQP (74 aa)) is the B5 domain. Residues aspartate 464, aspartate 470, glutamate 473, and glutamate 474 each contribute to the Mg(2+) site. The FDX-ACB domain occupies 710-804 (DHYQEVTRDI…DLMKTKQILI (95 aa)).

It belongs to the phenylalanyl-tRNA synthetase beta subunit family. Type 1 subfamily. In terms of assembly, tetramer of two alpha and two beta subunits. The cofactor is Mg(2+).

The protein resides in the cytoplasm. The catalysed reaction is tRNA(Phe) + L-phenylalanine + ATP = L-phenylalanyl-tRNA(Phe) + AMP + diphosphate + H(+). This Mycoplasmoides gallisepticum (strain R(low / passage 15 / clone 2)) (Mycoplasma gallisepticum) protein is Phenylalanine--tRNA ligase beta subunit.